The chain runs to 1019 residues: Macrophage colony-stimulating factor 1 receptor 2 (1019 aa).

A signal peptide spans 1 to 18; it reads MKSYCLLLSITLSCCCSA. Topologically, residues 19–576 are extracellular; the sequence is EDLPDPPSIH…LREHNSAFMS (558 aa). Ig-like C2-type domains are found at residues 37–109, 106–212, and 224–312; these read QAEA…IHLY, IHLY…LLVA, and QNKA…LIVL. C52 and C92 are disulfide-bonded. 14 N-linked (GlcNAc...) asparagine glycosylation sites follow: N96, N148, N169, N249, N342, N346, N355, N369, N379, N408, N422, N429, N433, and N514. Disulfide bonds link C139–C193 and C239–C294. Ig-like C2-type domains lie at 383-474 and 487-567; these read STTV…LRIY and TLTC…VFHL. The cysteines at positions 490 and 552 are disulfide-linked. The chain crosses the membrane as a helical span at residues 577–597; sequence ALIGAGSTAAILFLLLLVVFY. Residues 598-1019 lie on the Cytoplasmic side of the membrane; that stretch reads KWRQKPKYEI…LSVTNIYQLS (422 aa). Residues 601 to 633 are regulatory juxtamembrane domain; that stretch reads QKPKYEIRWKIIESTEGNHYTFVDPTLLPYNYK. Y620 carries the phosphotyrosine; by autocatalysis modification. The region spanning 641–963 is the Protein kinase domain; the sequence is LRLGAVLGSG…MICQLIDRLL (323 aa). Residues 647–655 and K674 contribute to the ATP site; that span reads LGSGAFGKV. Y756 and Y778 each carry phosphotyrosine; by autocatalysis. D827 (proton acceptor) is an active-site residue. Residues 845–867 form an activation loop region; that stretch reads DFGLARDIQNDDSYIVQGNARLP. Residues Y858 and Y974 each carry the phosphotyrosine; by autocatalysis modification. Residues 970–1001 are disordered; that stretch reads NHQSYSNINETKKDDFKGGKSQRRGEEEEQRR. Over residues 979–1001 the composition is skewed to basic and acidic residues; the sequence is ETKKDDFKGGKSQRRGEEEEQRR. A Phosphotyrosine; by autocatalysis modification is found at Y1016.

Belongs to the protein kinase superfamily. Tyr protein kinase family. CSF-1/PDGF receptor subfamily. In terms of assembly, monomer. Homodimer. Interacts with CSF1. Autophosphorylated in response to CSF1 binding. autophosphorylation, leading to its degradation. In terms of processing, ubiquitinated. Becomes rapidly polyubiquitinated after autophosphorylation, leading to its degradation.

The protein resides in the cell membrane. The catalysed reaction is L-tyrosyl-[protein] + ATP = O-phospho-L-tyrosyl-[protein] + ADP + H(+). Present in an inactive conformation in the absence of bound ligand. CSF1 binding leads to dimerization and activation by autophosphorylation on tyrosine residues. Tyrosine-protein kinase that acts as a cell-surface receptor for CSF1 and plays an essential role in the regulation of survival, proliferation and differentiation of hematopoietic precursor cells, especially mononuclear phagocytes, such as macrophages and monocytes. Plays an important role in innate immunity and in inflammatory processes. Plays an important role in the regulation of osteoclast proliferation and differentiation, the regulation of bone resorption, and is required for normal bone development. Promotes reorganization of the actin cytoskeleton, regulates formation of membrane ruffles, cell adhesion and cell migration. Activates several signaling pathways in response to ligand binding. The polypeptide is Macrophage colony-stimulating factor 1 receptor 2 (csf1r2) (Takifugu rubripes (Japanese pufferfish)).